We begin with the raw amino-acid sequence, 562 residues long: MLNKDQFADNHFIRTIIEDDLKSGKHEAVQTRFPPEPNGYLHIGHAKSICLNFGLAYIYDGLCNLRFDDTNPEKENDEYVNAIKEDVEWLGFHWAGEPRFASDYFDRLYDYAVGLIKDGKAYVDDLTPEEMREYRGTLTEAGKNSPYRDRSIEENLDLFTRMKNGEFPDGSKTLRLKIDMAAGNINMRDPVIYRIRRAHHHNTGDKWCIYPMYDYTHCISDAIEGITHSLCTLEFEAHRPLYDWVLDNIPALHATRPRQYEFSRLELLYTITSKRKLNQLVVEKHVSGWDDPRMPTISGMRRRGYTPEGVRLFAKRAGISKSENIVDMSVLEGAIREELENSAPRLMAVLNPLKVTLTNFQAGKTQSRRAAFHPNHEEMGDREVPVSQTIYIEADDFAENPPKGFKRLIPGGEVRLRHGYVIKCGEVVKDEAGNVVELKCSIDHDTLGKNPEGRKVKGVIHWVSAEHAAEIKVRLYDRLFTVERPGAVRGEDGEYLPFTDFLNPESVKEITAYAEPAAKDLPAESRWQFERIGYFVTDRQDHGKDTPVFNRTVTLKDSWQPK.

A 'HIGH' region motif is present at residues 35–45 (PEPNGYLHIGH). ATP-binding positions include 36–38 (EPN) and 42–48 (HIGHAKS). L-glutamine-binding residues include Asp68 and Tyr213. Residues Thr232 and 264–265 (RL) contribute to the ATP site. The 'KMSKS' region signature appears at 271–275 (ITSKR).

Belongs to the class-I aminoacyl-tRNA synthetase family. In terms of assembly, monomer.

The protein localises to the cytoplasm. It catalyses the reaction tRNA(Gln) + L-glutamine + ATP = L-glutaminyl-tRNA(Gln) + AMP + diphosphate. This chain is Glutamine--tRNA ligase, found in Neisseria gonorrhoeae (strain ATCC 700825 / FA 1090).